Here is an 861-residue protein sequence, read N- to C-terminus: Glucans biosynthesis glucosyltransferase H (861 aa).

6 consecutive transmembrane segments (helical) span residues 142–162 (FILL…MKGI), 188–208 (VLPY…FCWV), 516–536 (VFLT…FLVL), 573–593 (LFST…MLIW), 600–620 (FGGV…SVLL), and 683–703 (FLWW…VSVI).

The protein belongs to the glycosyltransferase 2 family. OpgH subfamily.

Its subcellular location is the cell inner membrane. It participates in glycan metabolism; osmoregulated periplasmic glucan (OPG) biosynthesis. Functionally, involved in the biosynthesis of osmoregulated periplasmic glucans (OPGs). The sequence is that of Glucans biosynthesis glucosyltransferase H from Pseudomonas aeruginosa (strain LESB58).